The sequence spans 322 residues: Ribonuclease Z (322 aa).

Zn(2+) is bound by residues histidine 62, histidine 64, aspartate 66, histidine 67, histidine 139, aspartate 210, and histidine 268. The active-site Proton acceptor is aspartate 66.

Belongs to the RNase Z family. In terms of assembly, homodimer. Zn(2+) serves as cofactor.

It catalyses the reaction Endonucleolytic cleavage of RNA, removing extra 3' nucleotides from tRNA precursor, generating 3' termini of tRNAs. A 3'-hydroxy group is left at the tRNA terminus and a 5'-phosphoryl group is left at the trailer molecule.. In terms of biological role, zinc phosphodiesterase, which displays some tRNA 3'-processing endonuclease activity. Probably involved in tRNA maturation, by removing a 3'-trailer from precursor tRNA. The sequence is that of Ribonuclease Z from Nostoc sp. (strain PCC 7120 / SAG 25.82 / UTEX 2576).